Here is a 595-residue protein sequence, read N- to C-terminus: MNELIKHKLELLPDSPGCYIHKDKNGTIIYVGKAKNLKNRVRSYFHGSHNTKTELLVSEIEDFEYIVTGSNTEALLLEINLIQENKPKYNIRLKDDKSYPFIKITNEPYPRLLITRQVKKDGGLYFGPYPDSGAATEIKRLLDRLFPFKKCTNPANKVCFYYHLGQCKAHTICQTDQTYWDSLKEDVKNFLNGRDDKIVNELRDKMTKASELMEFERAAEYRDLIEGIGLLRTKQRVMNQDMQDRDIFGYYVDKGWMCVQVFFIRQGKLIQRDVNMFPYYNESEEDFLTYVGQFYQDNRHFIPKEIFIPRNIDETLVKAVVNTKIIKPQRGEKKQLVNLATKNARVSLQQKFDLLEKDIRKTHGAIENIGDLLNIPKPVRIEAFDNSNIQGTSPVAAMVVFVDGKPSKKDYRKFKIKTVIGPDDYASMREVIYRRYSRVMRDGLTPPDLIIIDGGQGQVNVARDVIENKLGLDIPIAGLQKNDKHQTHELLFGDPLEVIPLPRNSEEFFLLQRIQDEVHRFAITFHRQLRGKNTFSSKLNGIAGLGPKRKQLLMKHFKNLPNIQKASLDDIINCGIPKNVAENIQESLREEREKG.

The 78-residue stretch at 14–91 (DSPGCYIHKD…IQENKPKYNI (78 aa)) folds into the GIY-YIG domain. Positions 196–231 (DKIVNELRDKMTKASELMEFERAAEYRDLIEGIGLL) constitute a UVR domain.

It belongs to the UvrC family. In terms of assembly, interacts with UvrB in an incision complex.

It localises to the cytoplasm. In terms of biological role, the UvrABC repair system catalyzes the recognition and processing of DNA lesions. UvrC both incises the 5' and 3' sides of the lesion. The N-terminal half is responsible for the 3' incision and the C-terminal half is responsible for the 5' incision. This Streptococcus mutans serotype c (strain ATCC 700610 / UA159) protein is UvrABC system protein C.